Consider the following 317-residue polypeptide: Melanocyte-stimulating hormone receptor (317 aa).

Residues M1–E37 are Extracellular-facing. N-linked (GlcNAc...) asparagine glycosylation is present at N29. Residues V38–I63 traverse the membrane as a helical segment. Residues A64–P72 are Cytoplasmic-facing. A helical transmembrane segment spans residues M73–L93. The Extracellular segment spans residues E94–N118. The chain crosses the membrane as a helical span at residues V119–V140. Topologically, residues D141–R163 are cytoplasmic. The helical transmembrane segment at I164 to Y183 threads the bilayer. Over N184–C191 the chain is Extracellular. The chain crosses the membrane as a helical span at residues L192–L211. The Cytoplasmic segment spans residues A212–A240. The helical transmembrane segment at A241 to L266 threads the bilayer. Residues C267 to N279 are Extracellular-facing. Residues F280–F300 traverse the membrane as a helical segment. The Cytoplasmic segment spans residues R301–W317. C315 carries S-palmitoyl cysteine lipidation.

It belongs to the G-protein coupled receptor 1 family. In terms of assembly, interacts with MGRN1, but does not undergo MGRN1-mediated ubiquitination; this interaction competes with GNAS-binding and thus inhibits agonist-induced cAMP production. Interacts with OPN3; the interaction results in a decrease in MC1R-mediated cAMP signaling and ultimately a decrease in melanin production in melanocytes.

The protein resides in the cell membrane. Its function is as follows. Receptor for MSH (alpha, beta and gamma) and ACTH. The activity of this receptor is mediated by G proteins which activate adenylate cyclase. Mediates melanogenesis, the production of eumelanin (black/brown) and phaeomelanin (red/yellow), via regulation of cAMP signaling in melanocytes. This chain is Melanocyte-stimulating hormone receptor (MC1R), found in Rangifer tarandus (Reindeer).